Consider the following 181-residue polypeptide: Malignant T-cell-amplified sequence 1 (181 aa).

Position 81 is a phosphothreonine; by MAPK1 and MAPK3 (Thr-81). The 80-residue stretch at 92–171 (LPHQQVDKGA…IGIENIHYLN (80 aa)) folds into the PUA domain. Ser-118 is modified (phosphoserine; by CDK1).

The protein belongs to the MCTS1 family. In terms of assembly, interacts (via PUA domain) with DENR; the complex regulates translation reinitiation. Post-translationally, phosphorylation is critical for stabilization and promotion of cell proliferation. As to expression, ubiquitous. Over-expressed in T-cell lymphoid cell lines and in non-Hodgkin lymphoma cell lines as well as in a subset of primary large B-cell lymphomas.

It localises to the cytoplasm. In terms of biological role, translation regulator forming a complex with DENR to promote translation reinitiation. Translation reinitiation is the process where the small ribosomal subunit remains attached to the mRNA following termination of translation of a regulatory upstream ORF (uORF), and resume scanning on the same mRNA molecule to initiate translation of a downstream ORF, usually the main ORF (mORF). The MCTS1/DENR complex is pivotal to two linked mechanisms essential for translation reinitiation. Firstly, the dissociation of deacylated tRNAs from post-termination 40S ribosomal complexes during ribosome recycling. Secondly, the recruitment in an EIF2-independent manner of aminoacylated initiator tRNA to P site of 40S ribosomes for a new round of translation. This regulatory mechanism governs the translation of more than 150 genes which translation reinitiation is MCTS1/DENR complex-dependent. Consequently, modulates various unrelated biological processes including cell cycle regulation and DNA damage signaling and repair. Notably, it positively regulates interferon gamma immunity to mycobacteria by enhancing the translation of JAK2. In Homo sapiens (Human), this protein is Malignant T-cell-amplified sequence 1 (MCTS1).